The primary structure comprises 377 residues: Bacterial actin-related protein (377 aa).

It belongs to the actin family.

Functionally, may be a dominant-negative inhibitor of eukaryotic actin polymerization. The sequence is that of Bacterial actin-related protein (barP) from Haliangium ochraceum (strain DSM 14365 / JCM 11303 / SMP-2).